The chain runs to 431 residues: Adenylosuccinate synthetase (431 aa).

GTP is bound by residues 13-19 and 41-43; these read GDEGKGK and GHT. Asp-14 serves as the catalytic Proton acceptor. Asp-14 and Gly-41 together coordinate Mg(2+). IMP contacts are provided by residues 14–17, 39–42, Thr-130, Arg-144, Gln-225, Thr-240, and Arg-304; these read DEGK and NAGH. Catalysis depends on His-42, which acts as the Proton donor. A substrate-binding site is contributed by 300 to 306; that stretch reads ATTGRQR. Residues Arg-306, 332–334, and 414–416 contribute to the GTP site; these read KLD and STG.

The protein belongs to the adenylosuccinate synthetase family. As to quaternary structure, homodimer. The cofactor is Mg(2+).

Its subcellular location is the cytoplasm. It catalyses the reaction IMP + L-aspartate + GTP = N(6)-(1,2-dicarboxyethyl)-AMP + GDP + phosphate + 2 H(+). Its pathway is purine metabolism; AMP biosynthesis via de novo pathway; AMP from IMP: step 1/2. Its function is as follows. Plays an important role in the de novo pathway of purine nucleotide biosynthesis. Catalyzes the first committed step in the biosynthesis of AMP from IMP. The protein is Adenylosuccinate synthetase of Saccharophagus degradans (strain 2-40 / ATCC 43961 / DSM 17024).